A 1218-amino-acid chain; its full sequence is MRFIVGRAGTGKSTLCRQEIHKESQEHPEGLPLILLVPEQATHQMEMSLAHDPQSGGILRAQVLSFRRLGWRVFSEVGGGGKAVIGEVGKRMLLRRLLLNHRSDLRVFARSATRPGMADLLAQAIAEFKIYRITPDQLRGIEDADELLLQKTHELAFLYEELNKSLGTAARDPDDELNLVAGKISQAPFLQGAKIWVDGFKGFTPQELYVIQAMLGTAAEITVSLPLDPELLKAGTPRFKPGEELFYEPRQTYQGLVDLAREAKASISHVFLTETHRFEKAGLKHLERFYNAYPTQTFPGGDDSTAPDPLGIALFPAANKRAEVEGVARELRRLAREEGRTWRDCSVVTRDLPGYQGIIEQVFNAHEIPYFLDHKRPVIHHPLLELLLSAIETVQKDWAYEPLFRCLKTDFFPCSKDRIDRLENYCLAYGIHGSAWKGNRSWSYYPDPNHKEETAGLNETRQIIYDLFSPFDQAIRPHPEAGGPSVTVAQITEAIYELLIRLKVPEHLQEWAEAAHSRGDLAEAQLQNQIWDAVIQVLDELVAGLGEEVMDLSDFAMILTSGLENLQLGLIPPGYDQVLVGSLDRSRNPETAVLFLLGANDGILPGKPSDEGVFDELERLRLESKGIMLAPKGKVQVYEEQYFIYTALTRAREQLYISYPLTDEEGRGLTVSPVIHRLKMIFPGLPEKYLSLDEEEPGALPHPYALLPAYALHLQKLRQGSSLSPLWQAIRLWFLSQTAAFPQVQLLEKGLRDQNEEGKLPQPLARQLYGKRLVTSVSRLELFARCPFAHFAQYGLKLKERSNYRLSPPDMGQFFHAVLHDYAIALRERGLDWGELSKEQSWQLVNETAEPIALQLQNKILLSNARYRYLTHKLKRTVHHAVRVLGEHARQGVFLPMELEVKFGPQEALPPLEVPLSGGNSLLLRGQIDRIDGAVLGHEIYLRIFDYKSREAHVSLNQIYHGLDLQLLAYLDAALQGAQILVSSSGLAEGSKGSEGSEGSEDSEDSTIHPAGFLYFPVLEPQLKSKTLLYPEQLEKDRIKAVKVKGYLLADRQVLLAMDRDLENSSLLGIKLTKSGEFKKGSPILTEEQFALLRKHLQHFLRCSGEALLEGDISITPYRQGKHTACQFCSYKPLCHFDPYLPENNYRNLPVIQDEEFWQRVQSQDSEQYPEQHPPTSVPGETSRRALQKDGGNSPRGQELIWLGEDEAGAGKEDDGHE.

In terms of domain architecture, UvrD-like helicase ATP-binding spans 1–279; it reads MRFIVGRAGT…VFLTETHRFE (279 aa). ATP is bound at residue 6–13; sequence GRAGTGKS. One can recognise a UvrD-like helicase C-terminal domain in the interval 281–588; that stretch reads AGLKHLERFY…LVGSLDRSRN (308 aa). Cys-786 provides a ligand contact to [4Fe-4S] cluster. The tract at residues 987 to 1006 is disordered; sequence LAEGSKGSEGSEGSEDSEDS. [4Fe-4S] cluster contacts are provided by Cys-1126, Cys-1129, and Cys-1135. Over residues 1160-1169 the composition is skewed to polar residues; that stretch reads RVQSQDSEQY. The disordered stretch occupies residues 1160-1218; the sequence is RVQSQDSEQYPEQHPPTSVPGETSRRALQKDGGNSPRGQELIWLGEDEAGAGKEDDGHE. The span at 1209–1218 shows a compositional bias: basic and acidic residues; it reads GAGKEDDGHE.

The protein belongs to the helicase family. AddB/RexB type 1 subfamily. Heterodimer of AddA and AddB. The cofactor is Mg(2+). Requires [4Fe-4S] cluster as cofactor.

Functionally, the heterodimer acts as both an ATP-dependent DNA helicase and an ATP-dependent, dual-direction single-stranded exonuclease. Recognizes the chi site generating a DNA molecule suitable for the initiation of homologous recombination. The AddB subunit has 5' -&gt; 3' nuclease activity but not helicase activity. This is ATP-dependent helicase/deoxyribonuclease subunit B from Desulfitobacterium hafniense (strain DSM 10664 / DCB-2).